A 134-amino-acid polypeptide reads, in one-letter code: MKSVFTLSASLAISLMLCCTAQANDHKILGVIAMPRNETNDLALKLPVCRIVKRIQLSADHGDLQLSGASVYFKAARSASQSLNIPSEIKEGQTTDWININSDNDNKRCVSKITFSGHTVNSSDMATLKIIGDD.

An N-terminal signal peptide occupies residues 1–23 (MKSVFTLSASLAISLMLCCTAQA).

This sequence belongs to the UPF0412 family.

The protein is UPF0412 protein YaaI of Escherichia coli O17:K52:H18 (strain UMN026 / ExPEC).